We begin with the raw amino-acid sequence, 198 residues long: Putative 3-methyladenine DNA glycosylase (198 aa).

This sequence belongs to the DNA glycosylase MPG family.

This chain is Putative 3-methyladenine DNA glycosylase, found in Rhizobium johnstonii (strain DSM 114642 / LMG 32736 / 3841) (Rhizobium leguminosarum bv. viciae).